Here is a 163-residue protein sequence, read N- to C-terminus: Neurotrophin-3 (163 aa).

The signal sequence occupies residues 1-3 (IQS). Residues 4-119 (TSMDQGILTE…VLNRTSRRKR (116 aa)) constitute a propeptide that is removed on maturation. The N-linked (GlcNAc...) asparagine glycan is linked to Asn-112.

It belongs to the NGF-beta family.

The protein resides in the secreted. Seems to promote the survival of visceral and proprioceptive sensory neurons. The polypeptide is Neurotrophin-3 (NTF3) (Chilabothrus striatus (Haitian boa constrictor)).